A 703-amino-acid chain; its full sequence is Elongation factor G (703 aa).

A tr-type G domain is found at 9–292; it reads ERTRNIGIMA…AVVDYLPGPL (284 aa). Residues 18-25, 91-95, and 145-148 each bind GTP; these read AHIDAGKT, DTPGH, and NKMD.

The protein belongs to the TRAFAC class translation factor GTPase superfamily. Classic translation factor GTPase family. EF-G/EF-2 subfamily.

It localises to the cytoplasm. Functionally, catalyzes the GTP-dependent ribosomal translocation step during translation elongation. During this step, the ribosome changes from the pre-translocational (PRE) to the post-translocational (POST) state as the newly formed A-site-bound peptidyl-tRNA and P-site-bound deacylated tRNA move to the P and E sites, respectively. Catalyzes the coordinated movement of the two tRNA molecules, the mRNA and conformational changes in the ribosome. In Leuconostoc mesenteroides subsp. mesenteroides (strain ATCC 8293 / DSM 20343 / BCRC 11652 / CCM 1803 / JCM 6124 / NCDO 523 / NBRC 100496 / NCIMB 8023 / NCTC 12954 / NRRL B-1118 / 37Y), this protein is Elongation factor G.